The primary structure comprises 228 residues: 7-cyano-7-deazaguanine synthase (228 aa).

Residue Leu-9–Leu-19 coordinates ATP. Zn(2+) contacts are provided by Cys-193, Cys-203, Cys-206, and Cys-209.

This sequence belongs to the QueC family. Zn(2+) serves as cofactor.

The enzyme catalyses 7-carboxy-7-deazaguanine + NH4(+) + ATP = 7-cyano-7-deazaguanine + ADP + phosphate + H2O + H(+). It functions in the pathway purine metabolism; 7-cyano-7-deazaguanine biosynthesis. Its function is as follows. Catalyzes the ATP-dependent conversion of 7-carboxy-7-deazaguanine (CDG) to 7-cyano-7-deazaguanine (preQ(0)). In Rickettsia conorii (strain ATCC VR-613 / Malish 7), this protein is 7-cyano-7-deazaguanine synthase.